The following is a 486-amino-acid chain: UDP-N-acetylmuramoyl-L-alanyl-D-glutamate--2,6-diaminopimelate ligase (486 aa).

Serine 30 serves as a coordination point for UDP-N-acetyl-alpha-D-muramoyl-L-alanyl-D-glutamate. 112-118 (GTNGKTT) serves as a coordination point for ATP. UDP-N-acetyl-alpha-D-muramoyl-L-alanyl-D-glutamate contacts are provided by residues 154-155 (TT), serine 181, glutamine 187, and arginine 189. Lysine 221 carries the post-translational modification N6-carboxylysine. Meso-2,6-diaminopimelate-binding positions include arginine 378, 402 to 405 (DNPR), glycine 455, and glutamate 459. The Meso-diaminopimelate recognition motif motif lies at 402 to 405 (DNPR).

It belongs to the MurCDEF family. MurE subfamily. Requires Mg(2+) as cofactor. Post-translationally, carboxylation is probably crucial for Mg(2+) binding and, consequently, for the gamma-phosphate positioning of ATP.

Its subcellular location is the cytoplasm. The catalysed reaction is UDP-N-acetyl-alpha-D-muramoyl-L-alanyl-D-glutamate + meso-2,6-diaminopimelate + ATP = UDP-N-acetyl-alpha-D-muramoyl-L-alanyl-gamma-D-glutamyl-meso-2,6-diaminopimelate + ADP + phosphate + H(+). It functions in the pathway cell wall biogenesis; peptidoglycan biosynthesis. In terms of biological role, catalyzes the addition of meso-diaminopimelic acid to the nucleotide precursor UDP-N-acetylmuramoyl-L-alanyl-D-glutamate (UMAG) in the biosynthesis of bacterial cell-wall peptidoglycan. The protein is UDP-N-acetylmuramoyl-L-alanyl-D-glutamate--2,6-diaminopimelate ligase of Cytophaga hutchinsonii (strain ATCC 33406 / DSM 1761 / CIP 103989 / NBRC 15051 / NCIMB 9469 / D465).